Here is a 957-residue protein sequence, read N- to C-terminus: Retinoblastoma-related protein 1 (957 aa).

A domain A region spans residues 369 to 569 (TPVSTAMTTA…EKGSSMYNSL (201 aa)). A pocket region spans residues 369–808 (TPVSTAMTTA…NEVFIPTVKP (440 aa)). The interval 570–677 (IVARPTLSAE…PAAGGETCAE (108 aa)) is spacer. Positions 678–808 (TGIGVFLSKI…NEVFIPTVKP (131 aa)) are domain B. Residues 814 to 854 (GPGTSPNRNNEPKSGGDAASFPESPRLSRFPNLPDMSPKKV) form a disordered region.

This sequence belongs to the retinoblastoma protein (RB) family.

It is found in the nucleus. Functionally, regulator of biological processes that recruits a histone deacetylase to control gene transcription. May play a role in the entry into mitosis, negatively regulating the cell proliferation. Formation of stable complexes with geminiviridae replication-associated proteins may create a cellular environment which favors viral DNA replication. The polypeptide is Retinoblastoma-related protein 1 (RBR1) (Triticum aestivum (Wheat)).